A 96-amino-acid polypeptide reads, in one-letter code: Guanine nucleotide-binding protein alpha-9 subunit (96 aa).

Positions 2-96 (YFHSTAIILF…ISASLKMVGV (95 aa)) constitute a G-alpha domain. The G1 motif stretch occupies residues 9-16 (ILFLNKID). Residues 13–16 (NKID) and A69 contribute to the GTP site. The interval 67–72 (TSATDT) is G2 motif.

It belongs to the G-alpha family. In terms of assembly, g proteins are composed of 3 units; alpha, beta and gamma. The alpha chain contains the guanine nucleotide binding site. As to expression, expressed in ASJ neurons.

Functionally, guanine nucleotide-binding proteins (G proteins) are involved as modulators or transducers in various transmembrane signaling systems. Plays a role in innate immunity and maintaining survival in response to metabolites of E.coli. This might be by regulating the expression and signaling of genes such as lys-8, ins-7 and daf-28. Has a role in lifespan to promote longevity. This is Guanine nucleotide-binding protein alpha-9 subunit from Caenorhabditis elegans.